The primary structure comprises 96 residues: Co-chaperonin GroES (96 aa).

Belongs to the GroES chaperonin family. Heptamer of 7 subunits arranged in a ring. Interacts with the chaperonin GroEL.

It is found in the cytoplasm. In terms of biological role, together with the chaperonin GroEL, plays an essential role in assisting protein folding. The GroEL-GroES system forms a nano-cage that allows encapsulation of the non-native substrate proteins and provides a physical environment optimized to promote and accelerate protein folding. GroES binds to the apical surface of the GroEL ring, thereby capping the opening of the GroEL channel. In Caulobacter sp. (strain K31), this protein is Co-chaperonin GroES.